We begin with the raw amino-acid sequence, 468 residues long: N-acetyltransferase SLI1 (468 aa).

It is found in the endoplasmic reticulum. Functionally, confers resistance to the sphingolipid biosynthesis inhibitor drug myriocin (ISP-1). Inactivates ISP-1 by converting it into N-acetyl-myriocin. Cooperates with YPK1 in mediating resistance to myriocin. The polypeptide is N-acetyltransferase SLI1 (SLI1) (Saccharomyces cerevisiae (strain ATCC 204508 / S288c) (Baker's yeast)).